A 52-amino-acid polypeptide reads, in one-letter code: Light-harvesting protein B800/830/1020 alpha-1 chain (52 aa).

At 1–12 the chain is on the cytoplasmic side; it reads MWRIWKVFDPRR. Residues 13–33 form a helical membrane-spanning segment; sequence ILIATAIWLIIIALTIHVILM. A bacteriochlorophyll is bound at residue His29. Topologically, residues 34–52 are periplasmic; that stretch reads TTERFNWLEGAPAAEYYSS.

Belongs to the antenna complex alpha subunit family. In terms of assembly, the core complex is formed by different alpha and beta chains, binding bacteriochlorophyll molecules, and arranged most probably in tetrameric structures disposed around the reaction center. The non-pigmented gamma chains may constitute additional components.

The protein resides in the cell inner membrane. In terms of biological role, antenna complexes are light-harvesting systems, which transfer the excitation energy to the reaction centers. This chain is Light-harvesting protein B800/830/1020 alpha-1 chain, found in Halorhodospira halochloris (Ectothiorhodospira halochloris).